The chain runs to 182 residues: Ribosome-recycling factor (182 aa).

It belongs to the RRF family.

It is found in the cytoplasm. Responsible for the release of ribosomes from messenger RNA at the termination of protein biosynthesis. May increase the efficiency of translation by recycling ribosomes from one round of translation to another. The protein is Ribosome-recycling factor of Gloeobacter violaceus (strain ATCC 29082 / PCC 7421).